The primary structure comprises 155 residues: MSRLHHQQGGQPSQRMLRVAELVRHAMSELLTRSDINDPALEGKVITVPDVRMSPDLKLATVYVMPLGGENVTEVLAALDRHKKLLRGEIARRVSLRFAPDVRFKADPGFEYSGKIDALLSSPKVKQDLEVQDLELKDSGCAGAPAKTGPAGDGE.

Belongs to the RbfA family. Monomer. Binds 30S ribosomal subunits, but not 50S ribosomal subunits or 70S ribosomes.

Its subcellular location is the cytoplasm. In terms of biological role, one of several proteins that assist in the late maturation steps of the functional core of the 30S ribosomal subunit. Associates with free 30S ribosomal subunits (but not with 30S subunits that are part of 70S ribosomes or polysomes). Required for efficient processing of 16S rRNA. May interact with the 5'-terminal helix region of 16S rRNA. In Methylocella silvestris (strain DSM 15510 / CIP 108128 / LMG 27833 / NCIMB 13906 / BL2), this protein is Ribosome-binding factor A.